Consider the following 65-residue polypeptide: Large ribosomal subunit protein bL35 (65 aa).

Belongs to the bacterial ribosomal protein bL35 family.

In Ruminiclostridium cellulolyticum (strain ATCC 35319 / DSM 5812 / JCM 6584 / H10) (Clostridium cellulolyticum), this protein is Large ribosomal subunit protein bL35.